The sequence spans 1173 residues: Eukaryotic translation initiation factor 3 subunit A (1173 aa).

Residues 319-502 (LQRMAAHVLL…NSIYFGTDLT (184 aa)) enclose the PCI domain. Disordered stretches follow at residues 589–613 (QNNAREEEEARRQEEESRKAKLAEQ) and 836–1173 (AAEA…PVQL). Basic and acidic residues-rich tracts occupy residues 836–900 (AAEA…RGGD), 925–1011 (DRNE…EPDS), 1028–1081 (SRDD…DAAP), and 1090–1125 (DAPRQSDRDNRRPAGDRRDREVRGGDLRGPESRAPK). The segment covering 1128–1142 (GPSGGTGTAAGGGGN) has biased composition (gly residues). Positions 1149–1165 (PRDEPAPKRDQPQDKGK) are enriched in basic and acidic residues.

It belongs to the eIF-3 subunit A family. In terms of assembly, component of the eukaryotic translation initiation factor 3 (eIF-3) complex. The eIF-3 complex interacts with pix.

It localises to the cytoplasm. Its function is as follows. RNA-binding component of the eukaryotic translation initiation factor 3 (eIF-3) complex, which is involved in protein synthesis of a specialized repertoire of mRNAs and, together with other initiation factors, stimulates binding of mRNA and methionyl-tRNAi to the 40S ribosome. The eIF-3 complex specifically targets and initiates translation of a subset of mRNAs involved in cell proliferation. This is Eukaryotic translation initiation factor 3 subunit A from Drosophila persimilis (Fruit fly).